The chain runs to 233 residues: Eosinophil granule major basic protein 1 (233 aa).

The N-terminal stretch at 1 to 15 is a signal peptide; the sequence is MKLLLLLALLLGAVS. Positions 16–114 are cleaved as a propeptide — acidic; the sequence is TRHLKVDTSS…VKFFSRPGYK (99 aa). The tract at residues 24–96 is disordered; the sequence is SSLQSLRGEE…SELDVSPEDI (73 aa). A compositionally biased stretch (low complexity) spans 42 to 57; that stretch reads AEGATREATAGALMPL. The segment covering 58-93 has biased composition (acidic residues); that stretch reads PEEEEMEGASGSEDDPEEEEEEEEEVEFSSELDVSP. The C-type lectin domain occupies 132–233; it reads WVCQRCYRGN…GKRRPFVCTY (102 aa). Cystine bridges form between C134-C231 and C208-C223.

Nitrated.

It localises to the cytoplasmic granule. Functionally, MBP may play some important roles in the allergic reactions and inflammations, since MBP is capable of releasing histamine from mast cells and damaging the epithelial cells of bronchial tubes. Antiparasitic and antibiotic. The polypeptide is Eosinophil granule major basic protein 1 (MBP1) (Cavia porcellus (Guinea pig)).